A 160-amino-acid chain; its full sequence is Large ribosomal subunit protein uL15 (160 aa).

The segment covering 1 to 11 (MKLNELRDNHG) has biased composition (basic and acidic residues). A disordered region spans residues 1–39 (MKLNELRDNHGARPKSKRLGRGIGSGKGKTSGKGVKGQK). Gly residues predominate over residues 21–35 (RGIGSGKGKTSGKGV).

Belongs to the universal ribosomal protein uL15 family. In terms of assembly, part of the 50S ribosomal subunit.

Binds to the 23S rRNA. This chain is Large ribosomal subunit protein uL15, found in Granulibacter bethesdensis (strain ATCC BAA-1260 / CGDNIH1).